Consider the following 166-residue polypeptide: UBA-like domain-containing protein 2-A (166 aa).

Positions 120–166 are disordered; it reads QQPVWLPPASPTTHLHHHHHHPQPVWPPNSQPTGGPQKAMAAMDGQR.

It belongs to the UBALD family.

The protein is UBA-like domain-containing protein 2-A (ubald2-a) of Xenopus laevis (African clawed frog).